The primary structure comprises 572 residues: Putative carbohydrate transport ATP-binding protein MPN_258 (572 aa).

ABC transporter domains are found at residues 6–253 (FRME…MGKE) and 327–572 (RFIR…LIMQ). 40–47 (GENGAGKS) contributes to the ATP binding site.

The protein belongs to the ABC transporter superfamily.

It localises to the cell membrane. Functionally, part of the ABC transporter complex involved in carbohydrates import. Probably responsible for energy coupling to the transport system. The sequence is that of Putative carbohydrate transport ATP-binding protein MPN_258 from Mycoplasma pneumoniae (strain ATCC 29342 / M129 / Subtype 1) (Mycoplasmoides pneumoniae).